The primary structure comprises 259 residues: FAD-linked sulfhydryl oxidase (259 aa).

The protein belongs to the baculoviridae p33 family. Homodimer.

It localises to the host cytoplasm. Its subcellular location is the host nucleus. The enzyme catalyses 2 R'C(R)SH + O2 = R'C(R)S-S(R)CR' + H2O2. Its function is as follows. Functional FAD-linked sulfhydryl oxidase that is required for infectious budded virion (BV) production and for the formation of enveloped occluded virion (ODV). The sequence is that of FAD-linked sulfhydryl oxidase (P33) from Lepidoptera (butterflies and moths).